A 718-amino-acid polypeptide reads, in one-letter code: Coiled-coil domain-containing protein 157 (718 aa).

A coiled-coil region spans residues L300–Q603. Residues R469 to L482 show a composition bias toward basic and acidic residues. Disordered stretches follow at residues R469–Q490 and P617–P690. A compositionally biased stretch (low complexity) spans T639–G659.

This Mus musculus (Mouse) protein is Coiled-coil domain-containing protein 157 (Ccdc157).